The following is a 111-amino-acid chain: Cytochrome c oxidase subunit 7A2-like, mitochondrial (111 aa).

The N-terminal 54 residues, 1-54 (MYYKFSSFTQKLAGAWASEAYTPQGLKPVSTEAPPIIFATPTKLTSSVTAYDYS), are a transit peptide targeting the mitochondrion. Lysine 68 bears the N6-acetyllysine mark. The chain crosses the membrane as a helical span at residues 79–104 (PDQMLYRTTMALTLGGTIYCLIALYM).

It belongs to the cytochrome c oxidase VIIa family.

Its subcellular location is the mitochondrion inner membrane. Its function is as follows. Non-functional protein. In contrast to the protein found in other strains (AC Q99KD6), cannot induce the assembly of mitochondrial respiratory supercomplexes. The sequence is that of Cytochrome c oxidase subunit 7A2-like, mitochondrial from Mus musculus (Mouse).